Here is a 331-residue protein sequence, read N- to C-terminus: MTKVYYEDAVKNNALEGKTVAVIGYGSQGHAHSQNLRDNGNNVIIGIREGKSAESARNDGFDVYSVSEAADKADVIMILLPDETQGETYENEIKPNLKAGNSLVFAHGFNIHFDVINPPSDVDVFLVAPKGPGHLVRRTFVEGGAVPSLFAIYQDATGNARDTALSYAKGIGATRAGVIETTFKEETETDLFGEQAVLCGGATHLIQAGFETLVEAGYQPELAYFEVLHEMKLIVDLMYEGGMEKMRHSISNTAEYGDYVSGPRVVTADTKKAMKEVLTDIQNGNFAKSFINDNKNGFKEFHRMRKEQQGHQIEKVGAELREMMPFVKPQH.

The region spanning 2-181 is the KARI N-terminal Rossmann domain; the sequence is TKVYYEDAVK…GATRAGVIET (180 aa). NADP(+) contacts are provided by residues 25 to 28, Arg48, Ser52, and 82 to 85; these read YGSQ and DETQ. Residue His107 is part of the active site. Residue Gly133 participates in NADP(+) binding. A KARI C-terminal knotted domain is found at 182–327; that stretch reads TFKEETETDL…AELREMMPFV (146 aa). Positions 190, 194, 226, and 230 each coordinate Mg(2+). Ser251 serves as a coordination point for substrate.

It belongs to the ketol-acid reductoisomerase family. Mg(2+) serves as cofactor.

The catalysed reaction is (2R)-2,3-dihydroxy-3-methylbutanoate + NADP(+) = (2S)-2-acetolactate + NADPH + H(+). It carries out the reaction (2R,3R)-2,3-dihydroxy-3-methylpentanoate + NADP(+) = (S)-2-ethyl-2-hydroxy-3-oxobutanoate + NADPH + H(+). Its pathway is amino-acid biosynthesis; L-isoleucine biosynthesis; L-isoleucine from 2-oxobutanoate: step 2/4. It functions in the pathway amino-acid biosynthesis; L-valine biosynthesis; L-valine from pyruvate: step 2/4. Its function is as follows. Involved in the biosynthesis of branched-chain amino acids (BCAA). Catalyzes an alkyl-migration followed by a ketol-acid reduction of (S)-2-acetolactate (S2AL) to yield (R)-2,3-dihydroxy-isovalerate. In the isomerase reaction, S2AL is rearranged via a Mg-dependent methyl migration to produce 3-hydroxy-3-methyl-2-ketobutyrate (HMKB). In the reductase reaction, this 2-ketoacid undergoes a metal-dependent reduction by NADPH to yield (R)-2,3-dihydroxy-isovalerate. In Listeria monocytogenes serovar 1/2a (strain ATCC BAA-679 / EGD-e), this protein is Ketol-acid reductoisomerase (NADP(+)).